Consider the following 1149-residue polypeptide: Bone sialoprotein-binding protein (1149 aa).

The first 52 residues, 1–52, serve as a signal peptide directing secretion; sequence MINRDNKKAITKKGMISNRLNKFSIRKYTVGTASILVGTTLIFGLGNQEAKA. A ligand binding A region region spans residues 53-601; sequence AENTSTENAK…GDGTVKPEEK (549 aa). 2 disordered regions span residues 54–249 and 675–697; these read ENTS…TAPT and LPTK…VTVK. Residues 61 to 75 are compositionally biased toward basic and acidic residues; that stretch reads AKQDEASASDNKEVV. Over residues 77–89 the composition is skewed to polar residues; the sequence is ETENNSTQKNDLT. Residues 92 to 106 show a composition bias toward basic and acidic residues; that stretch reads IKKETNTDSHQEAKE. The segment covering 109-126 has biased composition (low complexity); sequence TTSSTQQQQNNATTSTET. Basic and acidic residues predominate over residues 130-145; that stretch reads NIEKENVKPSTDKTAT. A compositionally biased stretch (polar residues) spans 158–205; it reads PNNTNNDVTTKPSTSEIQTTPTTPQESTNIENSQPQPTPSKVDNQVTD. Basic and acidic residues predominate over residues 216–241; it reads SKEELKNNPEKLKELVRNDSNTDRST. 3 CNA-B domains span residues 602–714, 715–824, and 825–935; these read LYKI…YKEP, KYNL…YKTP, and KYSL…EEDT. The segment at 896-1124 is disordered; that stretch reads TQTGTNTTED…TGSENNGSNN (229 aa). 2 stretches are compositionally biased toward acidic residues: residues 903–913 and 930–1088; these read TEDDKDADGGE and YFEE…DSDS. The LPXTG sorting signal signature appears at 1112–1116; the sequence is LPETG. Residue Thr-1115 is modified to Pentaglycyl murein peptidoglycan amidated threonine. Residues 1116–1149 constitute a propeptide, removed by sortase; that stretch reads GSENNGSNNATLFGGLFAALGSLLLFGRRKKQNK.

Belongs to the serine-aspartate repeat-containing protein (SDr) family.

It localises to the secreted. The protein resides in the cell wall. Functionally, specifically interacts with bone sialoprotein (BSP), a glycoprotein of bone and dentin extracellular matrix. Could contribute to staphylococcal osteomyelitis and arthritis. The polypeptide is Bone sialoprotein-binding protein (bbp) (Staphylococcus aureus).